A 270-amino-acid polypeptide reads, in one-letter code: 4-hydroxy-tetrahydrodipicolinate reductase (270 aa).

7-12 serves as a coordination point for NAD(+); that stretch reads GANGKM. Arg-34 contacts NADP(+). NAD(+) is bound by residues 97-99 and 121-124; these read GTT and SGNM. The active-site Proton donor/acceptor is the His-155. His-156 is a binding site for (S)-2,3,4,5-tetrahydrodipicolinate. Lys-159 functions as the Proton donor in the catalytic mechanism. A (S)-2,3,4,5-tetrahydrodipicolinate-binding site is contributed by 165–166; it reads GT.

The protein belongs to the DapB family.

The protein localises to the cytoplasm. It catalyses the reaction (S)-2,3,4,5-tetrahydrodipicolinate + NAD(+) + H2O = (2S,4S)-4-hydroxy-2,3,4,5-tetrahydrodipicolinate + NADH + H(+). The catalysed reaction is (S)-2,3,4,5-tetrahydrodipicolinate + NADP(+) + H2O = (2S,4S)-4-hydroxy-2,3,4,5-tetrahydrodipicolinate + NADPH + H(+). It participates in amino-acid biosynthesis; L-lysine biosynthesis via DAP pathway; (S)-tetrahydrodipicolinate from L-aspartate: step 4/4. Functionally, catalyzes the conversion of 4-hydroxy-tetrahydrodipicolinate (HTPA) to tetrahydrodipicolinate. The sequence is that of 4-hydroxy-tetrahydrodipicolinate reductase from Bartonella quintana (strain Toulouse) (Rochalimaea quintana).